The primary structure comprises 149 residues: NADH-quinone oxidoreductase subunit I 1 (149 aa).

4Fe-4S ferredoxin-type domains follow at residues 51 to 82 (LKSF…VQGT) and 93 to 122 (THYV…YSTE). The [4Fe-4S] cluster site is built by Cys62, Cys65, Cys68, Cys72, Cys102, Cys105, Cys108, and Cys112.

It belongs to the complex I 23 kDa subunit family. As to quaternary structure, NDH-1 is composed of 14 different subunits. Subunits NuoA, H, J, K, L, M, N constitute the membrane sector of the complex. Requires [4Fe-4S] cluster as cofactor.

It is found in the cell inner membrane. The catalysed reaction is a quinone + NADH + 5 H(+)(in) = a quinol + NAD(+) + 4 H(+)(out). Its function is as follows. NDH-1 shuttles electrons from NADH, via FMN and iron-sulfur (Fe-S) centers, to quinones in the respiratory chain. The immediate electron acceptor for the enzyme in this species is believed to be ubiquinone. Couples the redox reaction to proton translocation (for every two electrons transferred, four hydrogen ions are translocated across the cytoplasmic membrane), and thus conserves the redox energy in a proton gradient. The polypeptide is NADH-quinone oxidoreductase subunit I 1 (Syntrophobacter fumaroxidans (strain DSM 10017 / MPOB)).